Consider the following 497-residue polypeptide: UDP-N-acetylmuramoyl-L-alanyl-D-glutamate--2,6-diaminopimelate ligase (497 aa).

UDP-N-acetyl-alpha-D-muramoyl-L-alanyl-D-glutamate is bound at residue Ser-33. Residue 119-125 (GTNGKTT) coordinates ATP. Residues 161 to 162 (TT), Ser-188, Gln-194, and Arg-196 each bind UDP-N-acetyl-alpha-D-muramoyl-L-alanyl-D-glutamate. Lys-228 carries the N6-carboxylysine modification. Residues Arg-390, 414-417 (DNPR), Gly-465, and Glu-469 contribute to the meso-2,6-diaminopimelate site. Residues 414–417 (DNPR) carry the Meso-diaminopimelate recognition motif motif.

Belongs to the MurCDEF family. MurE subfamily. It depends on Mg(2+) as a cofactor. In terms of processing, carboxylation is probably crucial for Mg(2+) binding and, consequently, for the gamma-phosphate positioning of ATP.

Its subcellular location is the cytoplasm. The enzyme catalyses UDP-N-acetyl-alpha-D-muramoyl-L-alanyl-D-glutamate + meso-2,6-diaminopimelate + ATP = UDP-N-acetyl-alpha-D-muramoyl-L-alanyl-gamma-D-glutamyl-meso-2,6-diaminopimelate + ADP + phosphate + H(+). It functions in the pathway cell wall biogenesis; peptidoglycan biosynthesis. Functionally, catalyzes the addition of meso-diaminopimelic acid to the nucleotide precursor UDP-N-acetylmuramoyl-L-alanyl-D-glutamate (UMAG) in the biosynthesis of bacterial cell-wall peptidoglycan. This is UDP-N-acetylmuramoyl-L-alanyl-D-glutamate--2,6-diaminopimelate ligase from Synechococcus elongatus (strain ATCC 33912 / PCC 7942 / FACHB-805) (Anacystis nidulans R2).